The following is a 313-amino-acid chain: Protein OPG185 (313 aa).

Residues 1-16 form the signal peptide; the sequence is MTQLPILLLLISLVYA. The Virion surface portion of the chain corresponds to 17–274; it reads TPSPQTSKKI…TSISNYKTKD (258 aa). Residues Asn-37, Asn-69, Asn-112, Asn-159, Asn-194, and Asn-252 are each glycosylated (N-linked (GlcNAc...) asparagine; by host). A helical membrane pass occupies residues 275-295; it reads FVEIFGITTLIILSAVAIFCI. Topologically, residues 296-313 are intravirion; it reads TYYICNKHPRKYKTENKV.

This sequence belongs to the orthopoxvirus OPG185 family. In terms of assembly, heterodimerizes with OPG040. The heterodimer OPG185-OPG040 interacts with components of the entry fusion complex OPG143 and OPG094. Heterodimer with C3/VPC protein; disulfide-linked. In terms of processing, glycosylated; contains phosphate and sulfate-substituted glycans. O-glycosylation is required for hemagglutination and hemadsorption activities of infected cell membranes.

The protein resides in the virion membrane. Its subcellular location is the host membrane. Functionally, prevents cell to cell fusion by interacting with and directing the viral OPG040 protein on the host plasma membrane. The OPG185-OPG040 complex associates with components of the entry fusion complex (EFC) presumably to avoid superinfection and syncytium formation. Via its interaction with C3/VCP protein, protects the infected cell and probably also the extracellular enveloped virus from complement attack. The polypeptide is Protein OPG185 (OPG185) (Monkeypox virus).